Reading from the N-terminus, the 595-residue chain is Apolipoprotein N-acyltransferase 2 (595 aa).

A run of 5 helical transmembrane segments spans residues 30–50 (FLAF…FGFF), 63–83 (LFFH…HWII), 95–115 (VVAI…FPIF), 167–187 (AEIT…YTLF), and 210–230 (FITL…FLFK). The region spanning 241–555 (LNVLIVQPDA…AEALSETIDV (315 aa)) is the CN hydrolase domain. The active-site Proton acceptor is E293. K372 is an active-site residue. The active-site Nucleophile is C463. A helical transmembrane segment spans residues 569 to 589 (LIPWLMLFLTGIYYLNLLIGI).

Belongs to the CN hydrolase family. Apolipoprotein N-acyltransferase subfamily.

It is found in the cell inner membrane. The catalysed reaction is N-terminal S-1,2-diacyl-sn-glyceryl-L-cysteinyl-[lipoprotein] + a glycerophospholipid = N-acyl-S-1,2-diacyl-sn-glyceryl-L-cysteinyl-[lipoprotein] + a 2-acyl-sn-glycero-3-phospholipid + H(+). Its pathway is protein modification; lipoprotein biosynthesis (N-acyl transfer). Catalyzes the phospholipid dependent N-acylation of the N-terminal cysteine of apolipoprotein, the last step in lipoprotein maturation. The polypeptide is Apolipoprotein N-acyltransferase 2 (Leptospira interrogans serogroup Icterohaemorrhagiae serovar Lai (strain 56601)).